A 374-amino-acid polypeptide reads, in one-letter code: MRIQSLFVLFNVAIIAWSYPYEPLRVLQVGENEVMEVPESEKLNLRRRGVKFFDVTKHTSFLPFFNKEEEPTVPTYNYPPEISNKEVVDDSIKNIDKGSMHKNLAKFTSFYTRYYKSDHGFESAEWLAATIANITKDIPQDTLTIEHFDHKEWKQYSIIVRVTGSTTPEDIIIIGSHQDSINLLLPSIMAAPGADDNGSGTVTNMEALRLYTENFLKRGFRPNNTVEFHFYSAEEGGLLGSLDVFTAYAKQKKHVRAMLQQDMTGYVSDPEDEHVGIVTDYTTPALTDFIKLIINSYLSIPYRDTQCGYACSDHGSATRNGFPGSFVIESEFKKTNKYIHSTMDTLDRLSLAHMAEHTKIVLGVIIELGSWSAW.

The N-terminal stretch at 1–18 (MRIQSLFVLFNVAIIAWS) is a signal peptide. Zn(2+) contacts are provided by His177, Asp196, Glu235, Asp262, and His340.

The protein belongs to the peptidase M28 family. M28E subfamily. Requires Zn(2+) as cofactor.

The polypeptide is Probable aminopeptidase YDR415C (Saccharomyces cerevisiae (strain ATCC 204508 / S288c) (Baker's yeast)).